The primary structure comprises 240 residues: 4-hydroxy-tetrahydrodipicolinate reductase (240 aa).

NAD(+) is bound by residues A79–T81 and S103–M106. H135 acts as the Proton donor/acceptor in catalysis. H136 contacts (S)-2,3,4,5-tetrahydrodipicolinate. Residue K139 is the Proton donor of the active site. Residue G145–T146 participates in (S)-2,3,4,5-tetrahydrodipicolinate binding.

The protein belongs to the DapB family.

Its subcellular location is the cytoplasm. The enzyme catalyses (S)-2,3,4,5-tetrahydrodipicolinate + NAD(+) + H2O = (2S,4S)-4-hydroxy-2,3,4,5-tetrahydrodipicolinate + NADH + H(+). It carries out the reaction (S)-2,3,4,5-tetrahydrodipicolinate + NADP(+) + H2O = (2S,4S)-4-hydroxy-2,3,4,5-tetrahydrodipicolinate + NADPH + H(+). It functions in the pathway amino-acid biosynthesis; L-lysine biosynthesis via DAP pathway; (S)-tetrahydrodipicolinate from L-aspartate: step 4/4. Functionally, catalyzes the conversion of 4-hydroxy-tetrahydrodipicolinate (HTPA) to tetrahydrodipicolinate. The protein is 4-hydroxy-tetrahydrodipicolinate reductase of Staphylococcus epidermidis (strain ATCC 12228 / FDA PCI 1200).